The primary structure comprises 530 residues: PC4 and SFRS1-interacting protein (530 aa).

Residues 1–64 (MTRDFKPGDL…PKDIFPYSEN (64 aa)) enclose the PWWP domain. A Glycyl lysine isopeptide (Lys-Gly) (interchain with G-Cter in SUMO2) cross-link involves residue Lys75. Residues 88–349 (PKVKFSSQQA…VEKKRETSMD (262 aa)) form a disordered region. Positions 93 to 107 (SSQQASAKQSNASSD) are enriched in low complexity. Ser102, Ser105, and Ser106 each carry phosphoserine. The span at 113–135 (KETSVSKEDTDPEEKASNEDVTK) shows a compositional bias: basic and acidic residues. 2 positions are modified to phosphothreonine: Thr115 and Thr122. Residue Ser129 is modified to Phosphoserine. The residue at position 141 (Thr141) is a Phosphothreonine. The segment covering 144–153 (AARRGRKRKA) has biased composition (basic residues). A Nuclear localization signal motif is present at residues 146–156 (RRGRKRKAEKQ). Thr167 is subject to Phosphothreonine. Ser177 and Ser206 each carry phosphoserine. Basic and acidic residues predominate over residues 213 to 261 (EEDKSKKKGQEEKQPKKQLKKDEEGQKEEEKPRKEPDKKEGKKEVESKR). Ser271 is modified (phosphoserine). Thr272 bears the Phosphothreonine mark. Ser273 and Ser275 each carry phosphoserine. Positions 274–283 (DSEEEGDDQE) are enriched in acidic residues. Basic residues predominate over residues 287-302 (KRKGGRNFQTAHRRNM). A compositionally biased stretch (basic and acidic residues) spans 305 to 349 (GQHEKEAADRKRKQEEQMETEQQNKDEGKKPEVKKVEKKRETSMD). Coiled-coil stretches lie at residues 306–334 (QHEK…EGKK) and 371–395 (NRCI…KHTE). The interval 340-417 (VEKKRETSMD…VSQVIMEKST (78 aa)) is integrase-binding domain (IBD). At Ser434 the chain carries Phosphoserine. Thr437 carries the phosphothreonine modification. Ser443 carries the phosphoserine modification. Basic and acidic residues predominate over residues 446–473 (EQRQHEEANKTKDQGKKGPNKKLEKEQT). The tract at residues 446-530 (EQRQHEEANK…ISLKDSTLDN (85 aa)) is disordered. Over residues 474–494 (GSKTLNGGSDAQDSNQPQHNG) the composition is skewed to polar residues. The span at 498 to 530 (EESKDNHEASSKKKPSSEERETEISLKDSTLDN) shows a compositional bias: basic and acidic residues. A Phosphoserine modification is found at Ser514. Citrulline is present on Arg517. Ser522 bears the Phosphoserine mark. Residue Thr527 is modified to Phosphothreonine.

The protein belongs to the HDGF family. As to quaternary structure, monomer. Interacts with IFRD1/PC4. Interacts (via IBD domain) with POGZ (via IBM motif) and CDCA7L (via IBM motifs). Interacts (via IBD domain) with KMT2A (via IBM motifs) with a moderate affinity whereas interacts with the KMT2A-MEN1 complex with a greater affinity; MEN1 enhances interaction of KMT2A with PSIP1. Interacts (via IBD domain) with IWS1 (via IBM motif), MED1 (via IBM motif) and DBF4 (via IBM motifs). Citrullinated by PADI4.

It is found in the nucleus. Transcriptional coactivator involved in neuroepithelial stem cell differentiation and neurogenesis. Involved in particular in lens epithelial cell gene regulation and stress responses. May play an important role in lens epithelial to fiber cell terminal differentiation. May play a protective role during stress-induced apoptosis. This is PC4 and SFRS1-interacting protein (PSIP1) from Bos taurus (Bovine).